A 218-amino-acid polypeptide reads, in one-letter code: Deoxyribose-phosphate aldolase (218 aa).

Asp-92 acts as the Proton donor/acceptor in catalysis. The active-site Schiff-base intermediate with acetaldehyde is the Lys-155. The active-site Proton donor/acceptor is Lys-184.

The protein belongs to the DeoC/FbaB aldolase family. DeoC type 1 subfamily.

Its subcellular location is the cytoplasm. It carries out the reaction 2-deoxy-D-ribose 5-phosphate = D-glyceraldehyde 3-phosphate + acetaldehyde. The protein operates within carbohydrate degradation; 2-deoxy-D-ribose 1-phosphate degradation; D-glyceraldehyde 3-phosphate and acetaldehyde from 2-deoxy-alpha-D-ribose 1-phosphate: step 2/2. In terms of biological role, catalyzes a reversible aldol reaction between acetaldehyde and D-glyceraldehyde 3-phosphate to generate 2-deoxy-D-ribose 5-phosphate. This Clostridium kluyveri (strain NBRC 12016) protein is Deoxyribose-phosphate aldolase.